The chain runs to 300 residues: NAD kinase (300 aa).

Asp75 functions as the Proton acceptor in the catalytic mechanism. NAD(+)-binding positions include Asp75–Gly76, Asn149–Asp150, Arg177, Asp179, Thr190–Ser195, Ala214, and Gln248.

Belongs to the NAD kinase family. A divalent metal cation is required as a cofactor.

It localises to the cytoplasm. It catalyses the reaction NAD(+) + ATP = ADP + NADP(+) + H(+). In terms of biological role, involved in the regulation of the intracellular balance of NAD and NADP, and is a key enzyme in the biosynthesis of NADP. Catalyzes specifically the phosphorylation on 2'-hydroxyl of the adenosine moiety of NAD to yield NADP. The polypeptide is NAD kinase (Burkholderia cenocepacia (strain HI2424)).